We begin with the raw amino-acid sequence, 217 residues long: Putative oxidative stress regulator AosR (217 aa).

Residues 5–9 (CGRRC) carry the CXXXC motif. Residues cysteine 5 and cysteine 9 are joined by a disulfide bond.

It belongs to the AosR family.

The chain is Putative oxidative stress regulator AosR from Mycobacterium leprae (strain TN).